Here is a 145-residue protein sequence, read N- to C-terminus: Protein SPMIP3 (145 aa).

This Mus musculus (Mouse) protein is Protein SPMIP3.